Reading from the N-terminus, the 320-residue chain is mRNA decay activator protein ZFP36 (320 aa).

Residues 1-15 (MDLSAIYESLMSMSH) form a necessary for nuclear export region. Residues 1–93 (MDLSAIYESL…PTSPTATPTT (93 aa)) are necessary and sufficient for the association with mRNA decay enzymes and mRNA decay activation. 2 necessary for localization of ARE-containing mRNAs to processing bodies (PBs) regions span residues 1 to 167 (MDLS…DLAL) and 93 to 320 (TSSR…SVSE). Positions 17 to 50 (LSPDHGGTESSGGLWNINSSDSIPSGVTSRLTGR) are disordered. Residues 27-50 (SGGLWNINSSDSIPSGVTSRLTGR) are compositionally biased toward polar residues. A Phosphoserine; by MAPKAPK2 modification is found at Ser53. Ser59 carries the phosphoserine modification. The stretch at 64–68 (PPPPG) is one P-P-P-P-G repeat. Over residues 66–85 (PPGFAPLAPRPGPELSPSPT) the composition is skewed to pro residues. Positions 66–95 (PPGFAPLAPRPGPELSPSPTSPTATPTTSS) are disordered. A phosphoserine mark is found at Ser81 and Ser83. Residue Thr85 is modified to Phosphothreonine. Ser86 carries the post-translational modification Phosphoserine. Residues 86–95 (SPTATPTTSS) are compositionally biased toward low complexity. The necessary for nuclear localization stretch occupies residues 88–161 (TATPTTSSRY…GSRCHFIHNP (74 aa)). Positions 90–166 (TPTTSSRYKT…FIHNPTEDLA (77 aa)) are necessary for RNA-binding. 2 consecutive C3H1-type zinc fingers follow at residues 96 to 124 (RYKTELCRTYSESGRCRYGAKCQFAHGPG) and 134 to 162 (KYKTELCHKFYLQGRCPYGSRCHFIHNPT). Positions 96–187 (RYKTELCRTY…ISFSGLPSGR (92 aa)) are necessary for interaction with PABPN1. Residues 167–320 (LPGQPHVLRQ…PIFNRISVSE (154 aa)) form a necessary for mRNA decay activation region. A Phosphoserine; by MAPKAPK2 modification is found at Ser179. A disordered region spans residues 180 to 310 (FSGLPSGRRT…PQPPAPPRRL (131 aa)). Residue Ser190 is modified to Phosphoserine. A P-P-P-P-G repeat occupies 191–195 (PPPPG). Residues 197–209 (SGPSLSSCSFSPS) are compositionally biased toward low complexity. The residue at position 211 (Ser211) is a Phosphoserine. A P-P-P-P-G repeat occupies 212-216 (PPPPG). Ser221 is subject to Phosphoserine; by MAPK1; in vitro. At Thr251 the chain carries Phosphothreonine. A phosphoserine mark is found at Ser270 and Ser290. Low complexity predominate over residues 280-290 (SSGSSLGGSDS). Positions 300 to 309 (PPQPPAPPRR) are enriched in pro residues. An interaction with CNOT1 region spans residues 306-320 (PPRRLPIFNRISVSE). Phosphoserine is present on Ser317.

In terms of assembly, associates with cytoplasmic CCR4-NOT and PAN2-PAN3 deadenylase complexes to trigger ARE-containing mRNA deadenylation and decay processes. Part of a mRNA decay activation complex at least composed of poly(A)-specific exoribonucleases CNOT6, EXOSC2 and XRN1 and mRNA-decapping enzymes DCP1A and DCP2. Associates with the RNA exosome complex. Interacts (via phosphorylated form) with 14-3-3 proteins; these interactions promote exclusion of ZFP36 from cytoplasmic stress granules in response to arsenite treatment in a MAPKAPK2-dependent manner and does not prevent CCR4-NOT deadenylase complex recruitment or ZFP36-induced ARE-containing mRNA deadenylation and decay processes. Interacts with 14-3-3 proteins; these interactions occur in response to rapamycin in an Akt-dependent manner. Interacts with AGO2 and AGO4. Interacts (via C-terminus) with CNOT1; this interaction occurs in a RNA-independent manner and induces mRNA deadenylation. Interacts (via N-terminus) with CNOT6. Interacts with CNOT6L. Interacts (via C-terminus) with CNOT7; this interaction occurs in a RNA-independent manner, induces mRNA deadenylation and is inhibited in a phosphorylation MAPKAPK2-dependent manner. Interacts (via unphosphorylated form) with CNOT8; this interaction occurs in a RNA-independent manner and is inhibited in a phosphorylation MAPKAPK2-dependent manner. Interacts with DCP1A. Interacts (via N-terminus) with DCP2. Interacts with EDC3. Interacts (via N-terminus) with EXOSC2. Interacts with heat shock 70 kDa proteins. Interacts with KHSRP; this interaction increases upon cytokine-induced treatment. Interacts with MAP3K4; this interaction enhances the association with SH3KBP1/CIN85. Interacts with MAPKAPK2; this interaction occurs upon skeletal muscle satellite cell activation. Interacts with NCL. Interacts with NUP214; this interaction increases upon lipopolysaccharide (LPS) stimulation. Interacts with PABPC1; this interaction occurs in a RNA-dependent manner. Interacts (via hypophosphorylated form) with PABPN1 (via RRM domain and C-terminal arginine-rich region); this interaction occurs in the nucleus in a RNA-independent manner, decreases in presence of single-stranded poly(A) RNA-oligomer and in a p38 MAPK-dependent-manner and inhibits nuclear poly(A) tail synthesis. Interacts with PAN2. Interacts (via C3H1-type zinc finger domains) with PKM. Interacts (via C3H1-type zinc finger domains) with nuclear RNA poly(A) polymerase. Interacts with PPP2CA; this interaction occurs in LPS-stimulated cells and induces ZFP36 dephosphorylation, and hence may promote ARE-containing mRNAs decay. Interacts (via C-terminus) with PRR5L (via C-terminus); this interaction may accelerate ZFP36-mediated mRNA decay during stress. Interacts (via C-terminus) with SFN; this interaction occurs in a phosphorylation-dependent manner. Interacts (via extreme C-terminal region) with SH3KBP1/CIN85 (via SH3 domains); this interaction enhances MAP3K4-induced phosphorylation of ZFP36 at Ser-59 and Ser-86 and does not alter neither ZFP36 binding to ARE-containing transcripts nor TNF-alpha mRNA decay. Interacts with XRN1. Interacts (via C-terminus and Ser-179 phosphorylated form) with YWHAB; this interaction occurs in a p38/MAPKAPK2-dependent manner, increases cytoplasmic localization of ZFP36 and protects ZFP36 from Ser-179 dephosphorylation by serine/threonine phosphatase 2A, and hence may be crucial for stabilizing ARE-containing mRNAs. Interacts (via phosphorylated form) with YWHAE. Interacts (via C-terminus) with YWHAG; this interaction occurs in a phosphorylation-dependent manner. Interacts with YWHAH; this interaction occurs in a phosphorylation-dependent manner. Interacts with YWHAQ; this interaction occurs in a phosphorylation-dependent manner. Interacts with (via C-terminus) YWHAZ; this interaction occurs in a phosphorylation-dependent manner. Does not interact with SH3KBP1. Interacts (via P-P-P-P-G repeats) with GIGYF2; the interaction is direct. Post-translationally, phosphorylated. Phosphorylation at serine and/or threonine residues occurs in a p38 MAPK- and MAPKAPK2-dependent manner. Phosphorylated by MAPKAPK2 at Ser-53 and Ser-179; phosphorylation increases its stability and cytoplasmic localization, promotes binding to 14-3-3 adapter proteins and inhibits the recruitment of cytoplasmic CCR4-NOT and PAN2-PAN3 deadenylase complexes to the mRNA decay machinery, thereby inhibiting ZFP36-induced ARE-containing mRNA deadenylation and decay processes. Phosphorylation by MAPKAPK2 does not impair ARE-containing RNA-binding. Phosphorylated in a MAPKAPK2- and p38 MAPK-dependent manner upon skeletal muscle satellite cell activation; this phosphorylation inhibits ZFP36-mediated mRNA decay activity, and hence stabilizes MYOD1 mRNA. Phosphorylated by MAPK1 upon mitogen stimulation. Phosphorylated at Ser-59 and Ser-86; these phosphorylations increase in a SH3KBP1-dependent manner. Phosphorylated at serine and threonine residues in a pyruvate kinase PKM- and p38 MAPK-dependent manner. Phosphorylation at Ser-53 may participate in the PKM-mediated degradation of ZFP36 in a p38 MAPK-dependent manner. Dephosphorylated by serine/threonine phosphatase 2A at Ser-179. In terms of processing, ubiquitinated; pyruvate kinase (PKM)-dependent ubiquitination leads to proteasomal degradation through a p38 MAPK signaling pathway.

The protein localises to the nucleus. The protein resides in the cytoplasm. It is found in the cytoplasmic granule. It localises to the P-body. Zinc-finger RNA-binding protein that destabilizes numerous cytoplasmic AU-rich element (ARE)-containing mRNA transcripts by promoting their poly(A) tail removal or deadenylation, and hence provide a mechanism for attenuating protein synthesis. Acts as an 3'-untranslated region (UTR) ARE mRNA-binding adapter protein to communicate signaling events to the mRNA decay machinery. Recruits deadenylase CNOT7 (and probably the CCR4-NOT complex) via association with CNOT1, and hence promotes ARE-mediated mRNA deadenylation. Also functions by recruiting components of the cytoplasmic RNA decay machinery to the bound ARE-containing mRNAs. Self regulates by destabilizing its own mRNA. Binds to 3'-UTR ARE of numerous mRNAs. Also binds to ARE of its own mRNA. Plays a role in anti-inflammatory responses; suppresses tumor necrosis factor (TNF)-alpha production by stimulating ARE-mediated TNF-alpha mRNA decay and several other inflammatory ARE-containing mRNAs in interferon (IFN)- and/or lipopolysaccharide (LPS)-induced macrophages. Also plays a role in the regulation of dendritic cell maturation at the post-transcriptional level, and hence operates as part of a negative feedback loop to limit the inflammatory response. Promotes ARE-mediated mRNA decay of hypoxia-inducible factor HIF1A mRNA during the response of endothelial cells to hypoxia. Positively regulates early adipogenesis of preadipocytes by promoting ARE-mediated mRNA decay of immediate early genes (IEGs). Negatively regulates hematopoietic/erythroid cell differentiation by promoting ARE-mediated mRNA decay of the transcription factor STAT5B mRNA. Plays a role in maintaining skeletal muscle satellite cell quiescence by promoting ARE-mediated mRNA decay of the myogenic determination factor MYOD1 mRNA. Also associates with and regulates the expression of non-ARE-containing target mRNAs at the post-transcriptional level, such as MHC class I mRNAs. Participates in association with argonaute RISC catalytic components in the ARE-mediated mRNA decay mechanism; assists microRNA (miRNA) targeting ARE-containing mRNAs. May also play a role in the regulation of cytoplasmic mRNA decapping; enhances decapping of ARE-containing RNAs, in vitro. Involved in the delivery of target ARE-mRNAs to processing bodies (PBs). In addition to its cytosolic mRNA-decay function, affects nuclear pre-mRNA processing. Negatively regulates nuclear poly(A)-binding protein PABPN1-stimulated polyadenylation activity on ARE-containing pre-mRNA during LPS-stimulated macrophages. Also involved in the regulation of stress granule (SG) and P-body (PB) formation and fusion. Plays a role in the regulation of keratinocyte proliferation, differentiation and apoptosis. Plays a role as a tumor suppressor by inhibiting cell proliferation in breast cancer cells. The polypeptide is mRNA decay activator protein ZFP36 (Rattus norvegicus (Rat)).